A 269-amino-acid polypeptide reads, in one-letter code: Integral membrane protein 2C (269 aa).

At Thr-39 the chain carries Phosphothreonine. Residues 57–77 form a helical; Signal-anchor for type II membrane protein membrane-spanning segment; the sequence is VGGVCYLSMGMVVLLMGLVFA. The BRICHOS domain occupies 138 to 232; sequence FGGGDPADII…LCNGKDTYRL (95 aa). Cys-165 and Cys-224 form a disulfide bridge. Asn-171 carries an N-linked (GlcNAc...) asparagine glycan.

Belongs to the ITM2 family. As to quaternary structure, interacts with BACE1. Interacts with APP. Interacts with STMN2. In terms of processing, type I membrane-bound, as well as soluble, furin has a pre-eminent role in ITM2C proteolytic processing. PCSK7 and PCSK5 may also be involved although to a lesser extent. The soluble form of PCSK7 is incapable of processing ITM2C. Fails to undergo shedding by ADAM10 and intramembrane cleavage by SPPL2B.

The protein resides in the lysosome membrane. Its subcellular location is the cell membrane. Functionally, negative regulator of amyloid-beta peptide production. May inhibit the processing of APP by blocking its access to alpha- and beta-secretase. Binding to the beta-secretase-cleaved APP C-terminal fragment is negligible, suggesting that ITM2C is a poor gamma-secretase cleavage inhibitor. May play a role in TNF-induced cell death and neuronal differentiation. The protein is Integral membrane protein 2C (Itm2c) of Mus musculus (Mouse).